A 1204-amino-acid chain; its full sequence is Integrator complex subunit 2 (1204 aa).

The chain crosses the membrane as a helical span at residues 428–444; the sequence is FVSLSFCMLLAFSTLVS.

Belongs to the Integrator subunit 2 family. Component of the Integrator complex, composed of core subunits INTS1, INTS2, INTS3, INTS4, INTS5, INTS6, INTS7, INTS8, INTS9/RC74, INTS10, INTS11/CPSF3L, INTS12, INTS13, INTS14 and INTS15. The core complex associates with protein phosphatase 2A subunits PPP2CA and PPP2R1A, to form the Integrator-PP2A (INTAC) complex.

The protein resides in the nucleus. It localises to the nucleus membrane. Its subcellular location is the cytoplasm. In terms of biological role, component of the integrator complex, a multiprotein complex that terminates RNA polymerase II (Pol II) transcription in the promoter-proximal region of genes. The integrator complex provides a quality checkpoint during transcription elongation by driving premature transcription termination of transcripts that are unfavorably configured for transcriptional elongation: the complex terminates transcription by (1) catalyzing dephosphorylation of the C-terminal domain (CTD) of Pol II subunit POLR2A/RPB1 and SUPT5H/SPT5, (2) degrading the exiting nascent RNA transcript via endonuclease activity and (3) promoting the release of Pol II from bound DNA. The integrator complex is also involved in terminating the synthesis of non-coding Pol II transcripts, such as enhancer RNAs (eRNAs), small nuclear RNAs (snRNAs), telomerase RNAs and long non-coding RNAs (lncRNAs). Mediates recruitment of cytoplasmic dynein to the nuclear envelope, probably as component of the integrator complex. This is Integrator complex subunit 2 from Homo sapiens (Human).